Consider the following 276-residue polypeptide: Shikimate dehydrogenase (NADP(+)) (276 aa).

Shikimate contacts are provided by residues 15–17 and threonine 62; that span reads SLS. Residue lysine 66 is the Proton acceptor of the active site. Glutamate 78 contacts NADP(+). The shikimate site is built by asparagine 87 and aspartate 102. NADP(+)-binding positions include 151–156 and isoleucine 218; that span reads NRTVEK. Shikimate is bound at residue tyrosine 220. NADP(+) is bound at residue glycine 241.

This sequence belongs to the shikimate dehydrogenase family. As to quaternary structure, homodimer.

The enzyme catalyses shikimate + NADP(+) = 3-dehydroshikimate + NADPH + H(+). The protein operates within metabolic intermediate biosynthesis; chorismate biosynthesis; chorismate from D-erythrose 4-phosphate and phosphoenolpyruvate: step 4/7. In terms of biological role, involved in the biosynthesis of the chorismate, which leads to the biosynthesis of aromatic amino acids. Catalyzes the reversible NADPH linked reduction of 3-dehydroshikimate (DHSA) to yield shikimate (SA). The sequence is that of Shikimate dehydrogenase (NADP(+)) from Geobacillus kaustophilus (strain HTA426).